The sequence spans 451 residues: Secreted RxLR effector protein 111 (451 aa).

The signal sequence occupies residues 1–19 (MRGTLATALLLVASCRIAA). Residues 48–69 (RFLRDNREQRVALALTAANESR) carry the RxLR-dEER motif. N-linked (GlcNAc...) asparagine glycosylation occurs at N66. 2 stretches are compositionally biased toward polar residues: residues 175–184 (RKTLSKTQFK) and 413–426 (SPAS…QRTG). Disordered stretches follow at residues 175–194 (RKTL…STKR) and 404–451 (IPLQ…NKHA). Residues 437 to 451 (PERDSFRHIESNKHA) are compositionally biased toward basic and acidic residues.

The protein belongs to the RxLR effector family.

It localises to the secreted. It is found in the host nucleus. Secreted effector that acts as an elicitor that induces cell death in host plant cells. This is Secreted RxLR effector protein 111 from Plasmopara viticola (Downy mildew of grapevine).